A 361-amino-acid chain; its full sequence is MFKRRYVTLLPLFVLLAACSSKPKPTETDTTTGTPSGGFLLEPQHNVMQMGGDFANNPNAQQFIDKMVNKHGFDRQQLQEILSQAKRLDSVLRLMDNQAPTTSVKPPSGPNGAWLRYRKKFITPDNVQNGVVFWNQYEDALNRAWQVYGVPPEIIVGIIGVETRWGRVMGKTRILDALATLSFNYPRRAEYFSGELETFLLMARDEQDDPLNLKGSFAGAMGYGQFMPSSYKQYAVDFSGDGHINLWDPVDAIGSVANYFKAHGWVKGDQVAVMANGQAPGLPNGFKTKYSISQLAAAGLTPQQPLGNHQQASLLRLDVGTGYQYWYGLPNFYTITRYNHSTHYAMAVWQLGQAVALARVQ.

A signal peptide spans 1 to 18 (MFKRRYVTLLPLFVLLAA). Residue C19 is the site of N-palmitoyl cysteine attachment. Residue C19 is the site of S-diacylglycerol cysteine attachment. E162 is an active-site residue.

Monomer.

It localises to the cell outer membrane. It catalyses the reaction Exolytic cleavage of the (1-&gt;4)-beta-glycosidic linkage between N-acetylmuramic acid (MurNAc) and N-acetylglucosamine (GlcNAc) residues in peptidoglycan, from either the reducing or the non-reducing ends of the peptidoglycan chains, with concomitant formation of a 1,6-anhydrobond in the MurNAc residue.. Functionally, murein-degrading enzyme. Catalyzes the cleavage of the glycosidic bonds between N-acetylmuramic acid and N-acetylglucosamine residues in peptidoglycan. May play a role in recycling of muropeptides during cell elongation and/or cell division. In Escherichia coli (strain K12), this protein is Membrane-bound lytic murein transglycosylase B (mltB).